Reading from the N-terminus, the 389-residue chain is Sulfate adenylyltransferase (389 aa).

It belongs to the sulfate adenylyltransferase family.

The enzyme catalyses sulfate + ATP + H(+) = adenosine 5'-phosphosulfate + diphosphate. It functions in the pathway sulfur metabolism; hydrogen sulfide biosynthesis; sulfite from sulfate: step 1/3. This chain is Sulfate adenylyltransferase, found in Microcystis aeruginosa (strain NIES-843 / IAM M-2473).